We begin with the raw amino-acid sequence, 182 residues long: D-lyxose ketol-isomerase (182 aa).

Mn(2+)-binding residues include His74, His76, Glu87, and His142.

It belongs to the D-lyxose ketol-isomerase family. Homodimer. The cofactor is Mn(2+).

It catalyses the reaction D-lyxose = D-xylulose. Functionally, sugar isomerase that catalyzes the reversible isomerization of D-lyxose to D-xylulose. Shows weak activity with D-mannose and L-ribose. The chain is D-lyxose ketol-isomerase from Cohnella laeviribosi.